The following is a 434-amino-acid chain: Progestin and adipoQ receptor-like protein 1 (434 aa).

The Cytoplasmic segment spans residues 1–201 (MNPDEVNRAL…KSIWSLHTET (201 aa)). 2 disordered regions span residues 74–103 (LPQQEGHRSRATSFAGRIRAGSDDEAMPKH) and 118–137 (EINLQGTPDKRKDDEDELEV). Residues 202–222 (GNIWTHLIGCVAFFFLACWFL) form a helical membrane-spanning segment. Over 223-234 (TRPDNHIQFQEK) the chain is Extracellular. The chain crosses the membrane as a helical span at residues 235 to 255 (VVFSFFFAGAVLCLGLSFAFH). The Cytoplasmic portion of the chain corresponds to 256–273 (TLSCHSVNVVKIFCKLDY). The helical transmembrane segment at 274–294 (MGISLLIIGSFIPWIYYGFYC) threads the bilayer. Residues 295-299 (RREPK) are Extracellular-facing. A helical membrane pass occupies residues 300–320 (ITYIAMVSVLGIGAIVVSLWD). Residues 321 to 331 (KFSESRFRPIR) lie on the Cytoplasmic side of the membrane. A helical transmembrane segment spans residues 332–352 (AAVFVGMGCSGVIPTIHYIIT). Residues 353–362 (DGVHSLFADN) are Extracellular-facing. The helical transmembrane segment at 363-383 (SFHWLLLMAFLYLLGAGLYAT) threads the bilayer. Residues 384-403 (RTPERFFPGKCDIWFQSHQL) lie on the Cytoplasmic side of the membrane. Residues 404-424 (FHTCVVIAAFVHYYGISEMAF) form a helical membrane-spanning segment. Topologically, residues 425–434 (ARLNEQCPVR) are extracellular.

It belongs to the ADIPOR family.

Its subcellular location is the membrane. Its function is as follows. Probable receptor, which may be involved in metabolic pathways that regulate lipid metabolism such as fatty acid oxidation. In Caenorhabditis elegans, this protein is Progestin and adipoQ receptor-like protein 1 (paqr-1).